Consider the following 336-residue polypeptide: tRNA-dihydrouridine(20/20a) synthase (336 aa).

FMN contacts are provided by residues 24–26 (PMM) and Gln-77. The Proton donor role is filled by Cys-107. FMN is bound by residues Lys-146, His-178, 218–220 (NGG), and 240–241 (GR).

The protein belongs to the Dus family. DusA subfamily. FMN is required as a cofactor.

It carries out the reaction 5,6-dihydrouridine(20) in tRNA + NADP(+) = uridine(20) in tRNA + NADPH + H(+). The enzyme catalyses 5,6-dihydrouridine(20) in tRNA + NAD(+) = uridine(20) in tRNA + NADH + H(+). The catalysed reaction is 5,6-dihydrouridine(20a) in tRNA + NADP(+) = uridine(20a) in tRNA + NADPH + H(+). It catalyses the reaction 5,6-dihydrouridine(20a) in tRNA + NAD(+) = uridine(20a) in tRNA + NADH + H(+). Its function is as follows. Catalyzes the synthesis of 5,6-dihydrouridine (D), a modified base found in the D-loop of most tRNAs, via the reduction of the C5-C6 double bond in target uridines. Specifically modifies U20 and U20a in tRNAs. The sequence is that of tRNA-dihydrouridine(20/20a) synthase from Pseudomonas putida (strain ATCC 47054 / DSM 6125 / CFBP 8728 / NCIMB 11950 / KT2440).